The chain runs to 1090 residues: MAENTASHRRKPRSLNDRHYSILQDLSAPPRQPPSSSHGEDEETKKSMIKLAGRRRLCKALPKEDEADGYDDPDLVDFYSPVKGETSLDSAGIGNKFTSWDESKEANTELAGEPNFSIITDFCSPSPQLKQKEEMQGDGGRNEIMGILDDLTSKLGTMSIQKKKDSQSNDFDACGVKSQVDKFDFEDAKSSFSLLSDLSKSSPDVVTTYNAGVNSIKDKQGKSGFAIREEQTSKEFSREWEERISNVGKQNSYSGRHFDDNSEDNRQGYNLDRGKSQCKEVDQSMKTTRHIEVSEKIRTVGRSNAAKLRDLDEDDDDDDCLILSGKKAAEMKINKPARSYNAKRHGYDERSLEDEGSITLTGLNLSYTLPGKIATMLYPHQREGLNWLWSLHTQGKGGILGDDMGLGKTMQICSFLAGLFHSKLIKRALVVAPKTLLPHWMKELATVGLSQMTREYYGTSTKAREYDLHHILQGKGILLTTYDIVRNNTKALQGDDHYTDEDDEDGNKWDYMILDEGHLIKNPNTQRAKSLLEIPSSHRIIISGTPIQNNLKELWALFNFSCPGLLGDKNWFKQNYEHYILRGTDKNATDREQRIGSTVAKNLREHIQPFFLRRLKSEVFGDDGATSKLSKKDEIVVWLRLTACQRQLYEAFLNSEIVLSAFDGSPLAALTILKKICDHPLLLTKRAAEDVLEGMDSTLTQEEAGVAERLAMHIADNVDTDDFQTKNDSISCKLSFIMSLLENLIPEGHRVLIFSQTRKMLNLIQDSLTSNGYSFLRIDGTTKAPDRLKTVEEFQEGHVAPIFLLTSQVGGLGLTLTKADRVIVVDPAWNPSTDNQSVDRAYRIGQTKDVIVYRLMTSATVEEKIYRKQVYKGGLFKTATEHKEQIRYFSQQDLRELFSLPKGGFDVSPTQQQLYEEHYNQIKLDEKLESHVKFLETLGIAGVSHHSLLFSKTAPIQAIQKDEEEQIRRETALLLGRASASISQDTVINGADYAFKPKDVNLDKRINISPVDDKELSESVIKARLNRLTMLLQNKGTVSRLPDGGAKIQKQIAELTRELKDMKAAERINMPQVIDLEEDISRKMQKGLNL.

Disordered stretches follow at residues 1–51 and 247–273; these read MAEN…MIKL and VGKQ…NLDR. Residues 44–51 carry the Nuclear localization signal motif; sequence TKKSMIKL. Positions 256 to 273 are enriched in basic and acidic residues; it reads RHFDDNSEDNRQGYNLDR. The region spanning 389-564 is the Helicase ATP-binding domain; the sequence is WSLHTQGKGG…WALFNFSCPG (176 aa). 402–409 is an ATP binding site; it reads DDMGLGKT. Residues 515–518 carry the DEAH box motif; that stretch reads DEGH. The 160-residue stretch at 736–895 folds into the Helicase C-terminal domain; sequence FIMSLLENLI…IRYFSQQDLR (160 aa). The stretch at 1043–1069 forms a coiled coil; sequence DGGAKIQKQIAELTRELKDMKAAERIN.

It belongs to the SNF2/RAD54 helicase family.

The protein localises to the nucleus. Its function is as follows. DNA helicase that acts as an essential component of the spindle assembly checkpoint. Probable chromatin remodeling factor that regulate homologous recombination (HR) and non-homologous recombination (NHR). This Arabidopsis thaliana (Mouse-ear cress) protein is Protein CHROMATIN REMODELING 24.